Here is a 230-residue protein sequence, read N- to C-terminus: Large ribosomal subunit protein uL1 (230 aa).

The protein belongs to the universal ribosomal protein uL1 family. Part of the 50S ribosomal subunit.

Functionally, binds directly to 23S rRNA. The L1 stalk is quite mobile in the ribosome, and is involved in E site tRNA release. Protein L1 is also a translational repressor protein, it controls the translation of the L11 operon by binding to its mRNA. This chain is Large ribosomal subunit protein uL1, found in Granulibacter bethesdensis (strain ATCC BAA-1260 / CGDNIH1).